The following is a 312-amino-acid chain: Tyrosine recombinase XerC (312 aa).

The Core-binding (CB) domain maps to 10 to 101 (PDLQAARESW…GIRSLLRFLE (92 aa)). The 185-residue stretch at 122-306 (SLPKPLTASD…DTARLLEIYE (185 aa)) folds into the Tyr recombinase domain. Residues Arg-165, Lys-190, His-258, Arg-261, and His-284 contribute to the active site. Tyr-293 serves as the catalytic O-(3'-phospho-DNA)-tyrosine intermediate.

This sequence belongs to the 'phage' integrase family. XerC subfamily. In terms of assembly, forms a cyclic heterotetrameric complex composed of two molecules of XerC and two molecules of XerD.

It localises to the cytoplasm. Its function is as follows. Site-specific tyrosine recombinase, which acts by catalyzing the cutting and rejoining of the recombining DNA molecules. The XerC-XerD complex is essential to convert dimers of the bacterial chromosome into monomers to permit their segregation at cell division. It also contributes to the segregational stability of plasmids. The polypeptide is Tyrosine recombinase XerC (Mesorhizobium japonicum (strain LMG 29417 / CECT 9101 / MAFF 303099) (Mesorhizobium loti (strain MAFF 303099))).